A 262-amino-acid chain; its full sequence is MFVKAKKSLGQNFLIDREVLEKIVSITDITNKEVLEIGPGSGNLTTYILKKKPKKLYVVEKDDDLAILLKEKFDTEIKIINDDILKVSESTISDQKLSVFGNLPYNISTEILSKWILNIGSNFWFDSLVLMFQKEVADRIISEFNNSNYGRLSILSSWKLNVKKILDIKPQSFSPRPKIDSSLLLFTPKENFFKLKDPKNLEKITRIFFSQRRKMLKKPFNQVFDNGKEVAEKFGIDLNLRPQNLEPDVYFKLVKEYEDLRG.

S-adenosyl-L-methionine contacts are provided by Asn-12, Leu-14, Gly-38, Glu-60, Asp-83, and Asn-102.

It belongs to the class I-like SAM-binding methyltransferase superfamily. rRNA adenine N(6)-methyltransferase family. RsmA subfamily.

It is found in the cytoplasm. It catalyses the reaction adenosine(1518)/adenosine(1519) in 16S rRNA + 4 S-adenosyl-L-methionine = N(6)-dimethyladenosine(1518)/N(6)-dimethyladenosine(1519) in 16S rRNA + 4 S-adenosyl-L-homocysteine + 4 H(+). Specifically dimethylates two adjacent adenosines (A1518 and A1519) in the loop of a conserved hairpin near the 3'-end of 16S rRNA in the 30S particle. May play a critical role in biogenesis of 30S subunits. The chain is Ribosomal RNA small subunit methyltransferase A from Pelagibacter ubique (strain HTCC1062).